Here is a 403-residue protein sequence, read N- to C-terminus: DNA replication and repair protein RecF (403 aa).

30–37 (GSNGLGKT) serves as a coordination point for ATP.

The protein belongs to the RecF family.

The protein resides in the cytoplasm. Its function is as follows. The RecF protein is involved in DNA metabolism; it is required for DNA replication and normal SOS inducibility. RecF binds preferentially to single-stranded, linear DNA. It also seems to bind ATP. This Bifidobacterium adolescentis (strain ATCC 15703 / DSM 20083 / NCTC 11814 / E194a) protein is DNA replication and repair protein RecF.